We begin with the raw amino-acid sequence, 290 residues long: MWKDLFVKKKKYAPLPSEQARHEVPEGVMTKCPQCKKIMYTKELIKNLRVCLSCGYHHPMPARERIASLLDDGSFREYDADMISVNPLGFPGYIEKLEEDRRKSGLNEAVVTGEGALDGHPLVIAVMDSSFRMGSMGSVVGEKITRAVERAREQQMPFLIFTASGGARMQEGVLSLMQMAKTSAALKRFSNDGGLFISVMTHPTTGGVSASFASLGDYNFAEPGALIGFAGRRVIEQTVREELPDDFQTAEFLLKHGQLDAVIHRHELKETLAVVLDLHQKGGEEGWWRN.

Residues 28–290 enclose the CoA carboxyltransferase N-terminal domain; it reads VMTKCPQCKK…KGGEEGWWRN (263 aa). Positions 32, 35, 51, and 54 each coordinate Zn(2+). A C4-type zinc finger spans residues 32–54; sequence CPQCKKIMYTKELIKNLRVCLSC.

It belongs to the AccD/PCCB family. As to quaternary structure, acetyl-CoA carboxylase is a heterohexamer composed of biotin carboxyl carrier protein (AccB), biotin carboxylase (AccC) and two subunits each of ACCase subunit alpha (AccA) and ACCase subunit beta (AccD). Zn(2+) is required as a cofactor.

It is found in the cytoplasm. The catalysed reaction is N(6)-carboxybiotinyl-L-lysyl-[protein] + acetyl-CoA = N(6)-biotinyl-L-lysyl-[protein] + malonyl-CoA. It functions in the pathway lipid metabolism; malonyl-CoA biosynthesis; malonyl-CoA from acetyl-CoA: step 1/1. Functionally, component of the acetyl coenzyme A carboxylase (ACC) complex. Biotin carboxylase (BC) catalyzes the carboxylation of biotin on its carrier protein (BCCP) and then the CO(2) group is transferred by the transcarboxylase to acetyl-CoA to form malonyl-CoA. This is Acetyl-coenzyme A carboxylase carboxyl transferase subunit beta from Geobacillus kaustophilus (strain HTA426).